Consider the following 230-residue polypeptide: Ion-translocating oxidoreductase complex subunit E (230 aa).

The next 6 membrane-spanning stretches (helical) occupy residues Ala18 to Ala38, Leu39 to Leu59, Thr63 to Val83, Leu86 to Val106, Trp125 to Leu145, and Pro182 to Val202.

This sequence belongs to the NqrDE/RnfAE family. In terms of assembly, the complex is composed of six subunits: RsxA, RsxB, RsxC, RsxD, RsxE and RsxG.

It localises to the cell inner membrane. Functionally, part of a membrane-bound complex that couples electron transfer with translocation of ions across the membrane. Required to maintain the reduced state of SoxR. The chain is Ion-translocating oxidoreductase complex subunit E from Salmonella newport (strain SL254).